We begin with the raw amino-acid sequence, 317 residues long: Glutaminase (317 aa).

Substrate-binding residues include serine 67, asparagine 118, glutamate 162, asparagine 169, tyrosine 193, tyrosine 245, and valine 263.

This sequence belongs to the glutaminase family. As to quaternary structure, homotetramer.

The enzyme catalyses L-glutamine + H2O = L-glutamate + NH4(+). The sequence is that of Glutaminase from Brucella canis (strain ATCC 23365 / NCTC 10854 / RM-666).